The sequence spans 92 residues: Small ribosomal subunit protein uS19 (92 aa).

It belongs to the universal ribosomal protein uS19 family.

Its function is as follows. Protein S19 forms a complex with S13 that binds strongly to the 16S ribosomal RNA. The protein is Small ribosomal subunit protein uS19 of Baumannia cicadellinicola subsp. Homalodisca coagulata.